The primary structure comprises 193 residues: AP-3 complex subunit sigma-2 (193 aa).

Belongs to the adaptor complexes small subunit family. Adaptor protein complex 3 (AP-3) is a heterotetramer composed of two large adaptins (delta-type subunit AP3D1 and beta-type subunit AP3B1 or AP3B2), a medium adaptin (mu-type subunit AP3M1 or AP3M2) and a small adaptin (sigma-type subunit APS1 or AP3S2). Interacts with AGAP1. AP-3 associates with the BLOC-1 complex.

Its subcellular location is the golgi apparatus. The protein resides in the cytoplasmic vesicle membrane. In terms of biological role, part of the AP-3 complex, an adaptor-related complex which is not clathrin-associated. The complex is associated with the Golgi region as well as more peripheral structures. It facilitates the budding of vesicles from the Golgi membrane and may be directly involved in trafficking to lysosomes. In concert with the BLOC-1 complex, AP-3 is required to target cargos into vesicles assembled at cell bodies for delivery into neurites and nerve terminals. This Bos taurus (Bovine) protein is AP-3 complex subunit sigma-2 (AP3S2).